The chain runs to 1178 residues: MGPGQAGGALLLRLLMLVQGILNCLAYNVGLPGAKIFSGPSSEQFGYSVQQLTNPQGNWLLVGSPWSGFPENRMGDVYKCPVDLPTATCEKLNLQNSASISNVTEIKTNMSLGLTLTRNPGTGGFLTCGPLWAHQCGNQYYATGICSDVSPDFQFLTSFSPAVQACPSLVDVVVVCDESNSIYPWEAVKNFLVKFVTGLDIGPKKTQVALIQYANEPRIIFNLNDFETKEDMVQATSETRQHGGDLTNTFRAIEFARDYAYSQTSGGRPGATKVMVVVTDGESHDGSKLKTVIQQCNDDEILRFGIAVLGYLNRNALDTKNLIKEIKAIASTPTERYFFNVADEAALLEKAGTLGEQIFSIEGTVQGGDNFQMEMAQVGFSADYAPQNDILMLGAVGAFDWSGTLVQETSHKPVIFPKQAFDQVLQDRNHSSFLGYSVAAISTEDGVHFVAGAPRANYTGQIVLYSVNKQGNVTVIQSHRGDQIGSYFGSVLCSVDVDKDTITDVLLVGAPTYMNDLKKEEGKVYLFTITKGILNQHQFLEGPEGTGNARFGSAIAALSDINMDGFNDVIVGSPVENENSGAVYIYNGHQGTIRTKYSQKILGSNGAFRRHLQFFGRSLDGYGDLNGDSITDVSIGALGQVIQLWSQSIADVAIEALFTPDKITLLNKDAKITLKLCFRAEFRPAGQNNQVAILFNMTLDADGHSSRVTSRGVFRENSERFLQKNMVVNEVQKCSEHHISIQKPSDVVNPLDLRVDISLENPGTSPALEAYSETVKVFSIPFYKECGSDGICISDLILDVQQLPAIQTQSFIVSNQNKRLTFSVILKNRGESAYNTVVLAEFSENLFFASFSMPVDGTEVTCEVGSSQKSVTCDVGYPALKSEQQVTFTINFDFNLQNLQNQAAINFQAFSESQETNKADNSVSLTIPLLYDAELHLTRSTNINFYEISSDENAPSVIKSVEDIGPKFIFSLKVTAGSAPVSMALVTIHIPQYTKEKNPLLYLTGIQTDQAGDISCTAEINPLKLPHTAPSVSFKNENFRHTKELDCRTTSCSNITCWLKDLHMKAEYFINVTTRVWNRTFAASTFQTVQLTAAAEIDTHNPQLFVIEENAVTIPLMIMKPTEKAEVPTGVIIGSIIAGILLLLAMTAGLWKLGFFKRQYKKMGQNPDEMDETTELNS.

The N-terminal stretch at 1–26 (MGPGQAGGALLLRLLMLVQGILNCLA) is a signal peptide. Over 27-1129 (YNVGLPGAKI…KPTEKAEVPT (1103 aa)) the chain is Extracellular. FG-GAP repeat units lie at residues 31–89 (LPGA…TATC) and 98–158 (ASIS…FLTS). A disulfide bridge connects residues C80 and C89. N-linked (GlcNAc...) asparagine glycosylation is found at N102 and N109. The region spanning 185-362 (WEAVKNFLVK…TLGEQIFSIE (178 aa)) is the VWFA domain. FG-GAP repeat units lie at residues 363–417 (GTVQ…VIFP), 420–472 (AFDQ…KQGN), 474–536 (TVIQ…ILNQ), 537–595 (HQFL…TIRT), and 601–661 (ILGS…FTPD). N429, N457, and N472 each carry an N-linked (GlcNAc...) asparagine glycan. A Cell attachment site motif is present at residues 480–482 (RGD). Positions 496, 498, 500, 504, 560, 562, 564, 568, 624, 626, 628, and 632 each coordinate Ca(2+). 5 disulfide bridges follow: C677–C734, C786–C792, C862–C873, C1016–C1047, and C1052–C1057. Residue N696 is glycosylated (N-linked (GlcNAc...) asparagine). N1054, N1071, and N1078 each carry an N-linked (GlcNAc...) asparagine glycan. The helical transmembrane segment at 1130-1151 (GVIIGSIIAGILLLLAMTAGLW) threads the bilayer. The Cytoplasmic portion of the chain corresponds to 1152 to 1178 (KLGFFKRQYKKMGQNPDEMDETTELNS). The short motif at 1154–1158 (GFFKR) is the GFFKR motif element.

It belongs to the integrin alpha chain family. As to quaternary structure, heterodimer of an alpha and a beta subunit. Alpha-2 associates with beta-1. Interacts with HPS5 and RAB21.

The protein resides in the membrane. In terms of biological role, integrin alpha-2/beta-1 is a collagen receptor, being responsible for adhesion of platelets and other cells to collagens, modulation of collagen and collagenase gene expression, force generation and organization of newly synthesized extracellular matrix. It is also a receptor for laminins, collagen C-propeptides and E-cadherin. Mice homozygous for a null mutation in the alpha-2 die very early in embryogenesis. The protein is Integrin alpha-2 (Itga2) of Mus musculus (Mouse).